Here is a 172-residue protein sequence, read N- to C-terminus: 3-hydroxydecanoyl-[acyl-carrier-protein] dehydratase (172 aa).

The active site involves His71.

Belongs to the thioester dehydratase family. FabA subfamily. Homodimer.

It localises to the cytoplasm. The enzyme catalyses a (3R)-hydroxyacyl-[ACP] = a (2E)-enoyl-[ACP] + H2O. It catalyses the reaction (3R)-hydroxydecanoyl-[ACP] = (2E)-decenoyl-[ACP] + H2O. The catalysed reaction is (2E)-decenoyl-[ACP] = (3Z)-decenoyl-[ACP]. The protein operates within lipid metabolism; fatty acid biosynthesis. In terms of biological role, necessary for the introduction of cis unsaturation into fatty acids. Catalyzes the dehydration of (3R)-3-hydroxydecanoyl-ACP to E-(2)-decenoyl-ACP and then its isomerization to Z-(3)-decenoyl-ACP. Can catalyze the dehydratase reaction for beta-hydroxyacyl-ACPs with saturated chain lengths up to 16:0, being most active on intermediate chain length. This Pectobacterium carotovorum subsp. carotovorum (strain PC1) protein is 3-hydroxydecanoyl-[acyl-carrier-protein] dehydratase.